We begin with the raw amino-acid sequence, 689 residues long: Elongation factor G (689 aa).

In terms of domain architecture, tr-type G spans 8–282 (LNTRNIGIMA…AVVDYLPSPL (275 aa)). GTP contacts are provided by residues 17-24 (AHIDAGKT), 81-85 (DTPGH), and 135-138 (NKMD).

It belongs to the TRAFAC class translation factor GTPase superfamily. Classic translation factor GTPase family. EF-G/EF-2 subfamily.

The protein localises to the cytoplasm. Catalyzes the GTP-dependent ribosomal translocation step during translation elongation. During this step, the ribosome changes from the pre-translocational (PRE) to the post-translocational (POST) state as the newly formed A-site-bound peptidyl-tRNA and P-site-bound deacylated tRNA move to the P and E sites, respectively. Catalyzes the coordinated movement of the two tRNA molecules, the mRNA and conformational changes in the ribosome. The protein is Elongation factor G of Mycoplasma mycoides subsp. mycoides SC (strain CCUG 32753 / NCTC 10114 / PG1).